The primary structure comprises 301 residues: Probable tRNA pseudouridine synthase B (301 aa).

Aspartate 54 (nucleophile) is an active-site residue. The 75-residue stretch at leucine 227 to valine 301 folds into the PUA domain.

This sequence belongs to the pseudouridine synthase TruB family. Type 2 subfamily.

The catalysed reaction is uridine(55) in tRNA = pseudouridine(55) in tRNA. Functionally, could be responsible for synthesis of pseudouridine from uracil-55 in the psi GC loop of transfer RNAs. In Halobacterium salinarum (strain ATCC 29341 / DSM 671 / R1), this protein is Probable tRNA pseudouridine synthase B.